The primary structure comprises 64 residues: Conotoxin Cal6.26 (64 aa).

A signal peptide spans 1–22 (MKLTCVMIVAVLVLTVCKVVTS). Cystine bridges form between Cys-32-Cys-50, Cys-40-Cys-54, and Cys-49-Cys-60.

In terms of tissue distribution, expressed by the venom duct.

It is found in the secreted. Its function is as follows. Probable neurotoxin. In Californiconus californicus (California cone), this protein is Conotoxin Cal6.26.